Consider the following 298-residue polypeptide: S-adenosyl-L-methionine-dependent methyltransferase dpfgK (298 aa).

It belongs to the methyltransferase superfamily.

It participates in secondary metabolite biosynthesis; terpenoid biosynthesis. Its function is as follows. S-adenosyl-L-methionine-dependent methyltransferase; part of the gene cluster that mediates the biosynthesis of diterpenoid pyrones. The first step of the pathway is the synthesis of the alpha-pyrone moiety by the polyketide synthase dpfgA via condensation of one acetyl-CoA starter unit with 3 malonyl-CoA units and 2 methylations. The alpha-pyrone is then combined with geranylgeranyl pyrophosphate (GGPP) formed by the GGPP synthase dpfgD through the action of the prenyltransferase dpfgC to yield a linear alpha-pyrone diterpenoid. Subsequent steps in the diterpenoid pyrone biosynthetic pathway involve the decalin core formation, which is initiated by the epoxidation of the C10-C11 olefin by the FAD-dependent oxidoreductase dpfgE, and is followed by a cyclization cascade catalyzed by the terpene cyclase dpfgB. The short chain dehydrogenase/reductase dpfgG then oxidizes the 8S hydroxy group to a ketone and the short chain dehydrogenase/reductase dpfgH reduces the ketone to the 8R hydroxy group to yield higginsianin B. Higginsianin B is further methylated by the methyltransferase dpfgI to produce the intermediate named FDDP B. The cytochrome P450 monooxygenase dfgpJ then catalyzes a three-step oxidation at C-27 to generate a carboxylic acid as well as C-26 hydroxylation. Finally, methyltransferase dpfgK methylates the carboxylic acid generated by dpfgJ, yielding the final diterpenoid pyrones from the pathway which were named FDDP D and FDDP E. The chain is S-adenosyl-L-methionine-dependent methyltransferase dpfgK from Gibberella zeae (strain ATCC MYA-4620 / CBS 123657 / FGSC 9075 / NRRL 31084 / PH-1) (Wheat head blight fungus).